The sequence spans 384 residues: DNA dC-&gt;dU-editing enzyme APOBEC-3G (384 aa).

Residues 1–60 (MKPHFRNPVERMYQDTFSDNFYNRPILSRRNTVWLCYEVKTKGPSRPPLDAKIFRGQVYS) form an essential for cytoplasmic localization region. 2 CMP/dCMP-type deaminase domains span residues 29-138 (RRNT…LRSL) and 214-328 (GRHE…LRTL). At threonine 32 the chain carries Phosphothreonine; by PKA. Zn(2+) contacts are provided by histidine 65, cysteine 97, and cysteine 100. The segment at 209 to 336 (ELWVRGRHET…TLAKAGAEIS (128 aa)) is necessary for homooligomerization. The interval 213 to 215 (RGR) is interaction with DNA. Threonine 218 carries the phosphothreonine; by PKA and CAMK2 modification. Residue histidine 257 participates in Zn(2+) binding. Residue glutamate 259 is the Proton donor of the active site. Residues cysteine 288 and cysteine 291 each coordinate Zn(2+). The interaction with DNA stretch occupies residues 313–320 (RIYDDQGR).

Belongs to the cytidine and deoxycytidylate deaminase family. In terms of assembly, homodimer. Homooligomer. Can bind RNA to form ribonucleoprotein complexes of high-molecular-mass (HMM) or low-molecular-mass (LMM). HMM is inactive and heterogeneous in protein composition because of binding nonselectively to cellular RNAs, which in turn are associated with variety of cellular proteins. The LMM form which is enzymatically active has few or no RNAs associated. Its ability to form homooligomer is distinct from its ability to assemble into HMM. Interacts with APOBEC3B, APOBEC3F, MOV10, AGO2, EIF4E, EIF4ENIF1, DCP2 and DDX6 in an RNA-dependent manner. Interacts with AGO1, AGO3 and PKA/PRKACA. Zn(2+) is required as a cofactor.

The protein localises to the cytoplasm. It is found in the nucleus. The protein resides in the P-body. It catalyses the reaction a 2'-deoxycytidine in single-stranded DNA + H2O + H(+) = a 2'-deoxyuridine in single-stranded DNA + NH4(+). Functionally, DNA deaminase (cytidine deaminase) which acts as an inhibitor of retrovirus replication and retrotransposon mobility via deaminase-dependent and -independent mechanisms. After the penetration of retroviral nucleocapsids into target cells of infection and the initiation of reverse transcription, it can induce the conversion of cytosine to uracil in the minus-sense single-strand viral DNA, leading to G-to-A hypermutations in the subsequent plus-strand viral DNA. The resultant detrimental levels of mutations in the proviral genome, along with a deamination-independent mechanism that works prior to the proviral integration, together exert efficient antiretroviral effects in infected target cells. Selectively targets single-stranded DNA and does not deaminate double-stranded DNA or single- or double-stranded RNA. May inhibit the mobility of LTR retrotransposons. The sequence is that of DNA dC-&gt;dU-editing enzyme APOBEC-3G (APOBEC3G) from Pan paniscus (Pygmy chimpanzee).